The primary structure comprises 297 residues: Homoserine kinase (297 aa).

An ATP-binding site is contributed by P82–A92.

This sequence belongs to the GHMP kinase family. Homoserine kinase subfamily.

It localises to the cytoplasm. The enzyme catalyses L-homoserine + ATP = O-phospho-L-homoserine + ADP + H(+). Its pathway is amino-acid biosynthesis; L-threonine biosynthesis; L-threonine from L-aspartate: step 4/5. Its function is as follows. Catalyzes the ATP-dependent phosphorylation of L-homoserine to L-homoserine phosphate. This chain is Homoserine kinase, found in Clostridium botulinum (strain Okra / Type B1).